The primary structure comprises 387 residues: GTP-binding protein 10 (387 aa).

Positions 13-148 constitute an Obg domain; sequence GNFIDNLRLF…RVIHLDLKLI (136 aa). The OBG-type G domain occupies 149 to 344; it reads ADIGLVGFPN…LKNCIRKSLD (196 aa). GTP is bound by residues 155 to 162, 202 to 206, and 278 to 281; these read GFPNAGKS, DLPGL, and NKMD.

It belongs to the TRAFAC class OBG-HflX-like GTPase superfamily. OBG GTPase family.

The protein localises to the nucleus. It is found in the nucleolus. Its function is as follows. May be involved in the ribosome maturation process. This chain is GTP-binding protein 10 (GTPBP10), found in Bos taurus (Bovine).